Reading from the N-terminus, the 1939-residue chain is MSSDAEMAVFGEAAPYLRKSEKERIEAQNKPFDAKSSVFVVDAKESYVKATVQSREGGKVTAKTEGGATVTVKDDQVFSMNPPKYDKIEDMAMMTHLHEPAVLYNLKERYAAWMIYTYSGLFCVTVNPYKWLPVYNPEVVAAYRGKKRQEAPPHIFSISDNAYQFMLTDRENQSILITGESGAGKTVNTKRVIQYFATIAVTGDKKKEEATSGKMQGTLEDQIISANPLLEAFGNAKTVRNDNSSRFGKFIRIHFGATGKLASADIETYLLEKSRVTFQLKAERSYHIFYQIMSNKKPELIEMLLITTNPYDFAYVSQGEITVPSIDDQEELMATDTAVDILGFSADEKVAIYKLTGAVMHYGNMKFKQKQREEQAEPDGTEVADKAAYLTSLNSADLLKALCYPRVKVGNEYVTKGQTVQQVYNSVGALAKSMYEKMFLWMVTRINQQLDTKQPRQYFIGVLDIAGFEIFDFNTLEQLCINFTNEKLQQFFNHHMFVLEQEEYKKEGIDWEFIDFGMDLAACIELIEKPMGIFSILEEECMFPKATDTSFKNKLYEQHLGKSNNFQKPKPAKGKAEAHFSLVHYAGTVDYNIIGWLDKNKDPLNETVVGLYQKSGLKTLAFLFSGGQAAEAEGGGGKKGGKKKGSSFQTVSALFRENLNKLMTNLKSTHPHFVRCLIPNETKTPGAMEHELVLHQLRCNGVLEGIRICRKGFPSRILYADFKQRYKVLNASAIPEGQFIDSKKASEKLLGSIDIDHTQYKFGHTKVFFKAGLLGTLEEMRDEKLAQLITRTQAVCRGYLMRVEFKKMMERRESIFCIQYNVRAFMNVKHWPWMKLYFKIKPLLKSAETEKEMANMKEDFEKAKEDLAKSEAKRKELEEKMVALMQEKNDLQLQVQAEADGLADAEERCDQLIKTKIQLEAKIKELTERAEDEEEINAELTAKKRKLEDECSELKKDIDDLELTLAKVEKEKHATENKVKNLTEEMAGLDENIAKLTKEKKALQEAHQQTLDDLQAEEDKVNTLTKAKTKLEQQVDDLEGSLEQEKKLRMDLERAKRKLEGDLKLAQESTMDIENDKQQLDEKLKKKEFEMSNLQSKIEDEQALGMQLQKKIKELQARIEELEEEIEAERASRAKAEKQRSDLSRELEEISERLEEAGGATSAQIEMNKKREAEFQKMRRDLEEATLQHEATAAALRKKHADSVAELGEQIDNLQRVKQKLEKEKSELKMEIDDLASNMETVSKAKGNLEKMCRTLEDQLSEVKTKEEEQQRLINELSTQKARLHTESGEFSRQLDEKDAMVSQLSRGKQAFTQQIEELKRQLEEESKAKNALAHALQSARHDCDLLREQYEEEQEAKAELQRAMSKANSEVAQWRTKYETDAIQRTEELEEAKKKLAQRLQDAEEHVEAVNSKCASLEKTKQRLQNEVEDLMIDVERSNAACAALDKKQRNFDKVLAEWKQKYEETQAELEASQKESRSLSTELFKVKNAYEESLDQLETLKRENKNLQQEISDLTEQIAEGGKHIHELEKIKKQIDQEKSELQASLEEAEASLEHEEGKILRIQLELNQVKSEIDRKIAEKDEEIDQLKRNHLRVVESMQSTLDAEIRSRNDALRIKKKMEGDLNEMEIQLNHANRQAAEAIRNLRNTQGMLKDTQLHLDDALRGQDDLKEQLAMVERRANLMQAEIEELRASLEQTERSRRVAEQELLDASERVQLLHTQNTSLINTKKKLETDISQIQGEMEDIVQEARNAEEKAKKAITDAAMMAEELKKEQDTSAHLERMKKNMEQTVKDLQHRLDEAEQLALKGGKKQIQKLEARVRELENEVENEQKRNIEAVKGLRKHERRVKELTYQTEEDRKNVLRLQDLVDKLQTKVKAYKRQAEEAEEQSNVNLAKFRKIQHELEEAEERADIAESQVNKLRVKSREVHTKVISEE.

The Myosin N-terminal SH3-like domain maps to 33 to 82 (DAKSSVFVVDAKESYVKATVQSREGGKVTAKTEGGATVTVKDDQVFSMNP). Residue Ser36 is modified to Phosphoserine. Phosphothreonine is present on residues Thr64 and Thr69. Residue Ser79 is modified to Phosphoserine. The 697-residue stretch at 86 to 782 (DKIEDMAMMT…LLGTLEEMRD (697 aa)) folds into the Myosin motor domain. Lys130 carries the N6,N6,N6-trimethyllysine modification. An ATP-binding site is contributed by 179-186 (GESGAGKT). Residue Tyr389 is modified to Phosphotyrosine. Thr391 is modified (phosphothreonine). Ser392 is subject to Phosphoserine. Thr419 is subject to Phosphothreonine. Position 424 is a phosphotyrosine (Tyr424). Phosphoserine is present on Ser625. The interval 659–681 (LNKLMTNLKSTHPHFVRCLIPNE) is actin-binding. A Pros-methylhistidine modification is found at His757. Residues 761–775 (KFGHTKVFFKAGLLG) form an actin-binding region. A Phosphothreonine modification is found at Thr776. An IQ domain is found at 785 to 814 (LAQLITRTQAVCRGYLMRVEFKKMMERRES). Residues 843–1939 (LLKSAETEKE…EVHTKVISEE (1097 aa)) are a coiled coil. A phosphoserine mark is found at Ser1092 and Ser1096. Disordered stretches follow at residues 1128–1147 (AERA…SREL) and 1153–1172 (RLEE…KKRE). Ser1162 and Ser1237 each carry phosphoserine. Thr1241 is subject to Phosphothreonine. The residue at position 1243 (Ser1243) is a Phosphoserine. A Phosphothreonine modification is found at Thr1255. A Phosphoserine modification is found at Ser1261. Thr1265 carries the post-translational modification Phosphothreonine. The tract at residues 1276–1299 (ELSTQKARLHTESGEFSRQLDEKD) is disordered. At Ser1278 the chain carries Phosphoserine. The segment covering 1284–1299 (LHTESGEFSRQLDEKD) has biased composition (basic and acidic residues). Residue Thr1286 is modified to Phosphothreonine. 5 positions are modified to phosphoserine: Ser1288, Ser1292, Ser1303, Ser1306, and Ser1413. Tyr1464 is subject to Phosphotyrosine. Phosphothreonine is present on Thr1467. Residue Ser1474 is modified to Phosphoserine. Phosphotyrosine is present on Tyr1492. Ser1495 is subject to Phosphoserine. The residue at position 1501 (Thr1501) is a Phosphothreonine. Position 1514 is a phosphoserine (Ser1514). Position 1517 is a phosphothreonine (Thr1517). Residues Ser1542, Ser1547, Ser1554, Ser1574, Ser1600, Ser1603, Ser1714, and Ser1726 each carry the phosphoserine modification. Thr1730 and Thr1736 each carry phosphothreonine. Ser1739 bears the Phosphoserine mark.

Belongs to the TRAFAC class myosin-kinesin ATPase superfamily. Myosin family. In terms of assembly, muscle myosin is a hexameric protein that consists of 2 heavy chain subunits (MHC), 2 alkali light chain subunits (MLC) and 2 regulatory light chain subunits (MLC-2). As to expression, expressed in type 2b myofibers in the tibialis anterior muscle (at protein level).

It localises to the cytoplasm. The protein resides in the myofibril. In terms of biological role, muscle contraction. This chain is Myosin-4 (Myh4), found in Mus musculus (Mouse).